The following is a 1691-amino-acid chain: Protein TIC 214 (1691 aa).

Transmembrane regions (helical) follow at residues 19 to 39 (MLLGFYYGLLTTLPVGPSQIL), 60 to 80 (VLAQLITASSIYCSPIYLLLL), 84 to 104 (LLTIVAIPYTLLFCLVIKDFP), 123 to 143 (LFLISFFFQILNPIMLPNSVL), 158 to 178 (TVFMVSTFMGWLTGQAAFNFF), and 200 to 220 (FIYATFSIVSISYAVAYLGRA). Residues 819–839 (EKQHTLQRKHKEIGSKSRELK) are disordered.

This sequence belongs to the TIC214 family. Part of the Tic complex.

The protein localises to the plastid. It localises to the chloroplast inner membrane. In terms of biological role, involved in protein precursor import into chloroplasts. May be part of an intermediate translocation complex acting as a protein-conducting channel at the inner envelope. In Adiantum capillus-veneris (Maidenhair fern), this protein is Protein TIC 214.